We begin with the raw amino-acid sequence, 662 residues long: tRNA 5-methylaminomethyl-2-thiouridine biosynthesis bifunctional protein MnmC (662 aa).

Residues 1-245 (MKQNAIQPAN…KREMLTGEMA (245 aa)) form a tRNA (mnm(5)s(2)U34)-methyltransferase region. The tract at residues 270-662 (IGGGIASALL…RKLLKGKAVK (393 aa)) is FAD-dependent cmnm(5)s(2)U34 oxidoreductase.

The protein in the N-terminal section; belongs to the methyltransferase superfamily. tRNA (mnm(5)s(2)U34)-methyltransferase family. It in the C-terminal section; belongs to the DAO family. The cofactor is FAD.

It localises to the cytoplasm. The catalysed reaction is 5-aminomethyl-2-thiouridine(34) in tRNA + S-adenosyl-L-methionine = 5-methylaminomethyl-2-thiouridine(34) in tRNA + S-adenosyl-L-homocysteine + H(+). Functionally, catalyzes the last two steps in the biosynthesis of 5-methylaminomethyl-2-thiouridine (mnm(5)s(2)U) at the wobble position (U34) in tRNA. Catalyzes the FAD-dependent demodification of cmnm(5)s(2)U34 to nm(5)s(2)U34, followed by the transfer of a methyl group from S-adenosyl-L-methionine to nm(5)s(2)U34, to form mnm(5)s(2)U34. The chain is tRNA 5-methylaminomethyl-2-thiouridine biosynthesis bifunctional protein MnmC from Klebsiella pneumoniae subsp. pneumoniae (strain ATCC 700721 / MGH 78578).